We begin with the raw amino-acid sequence, 367 residues long: Diphthine methyltransferase homolog (367 aa).

WD repeat units follow at residues 84–124 (NFNS…KKLE), 132–173 (SLSN…SKVT), 180–220 (AHDY…NHND), and 234–274 (RCDM…QPII).

Belongs to the DPH7 family.

It catalyses the reaction diphthine methyl ester-[translation elongation factor 2] + H2O = diphthine-[translation elongation factor 2] + methanol + H(+). It functions in the pathway protein modification; peptidyl-diphthamide biosynthesis. In terms of biological role, catalyzes the demethylation of diphthine methyl ester to form diphthine, an intermediate diphthamide biosynthesis, a post-translational modification of histidine which occurs in translation elongation factor 2 (efbA). The chain is Diphthine methyltransferase homolog (wdr85) from Dictyostelium discoideum (Social amoeba).